A 451-amino-acid chain; its full sequence is D-ribitol-5-phosphate cytidylyltransferase (451 aa).

Residues 1–29 (MEAGPPGSARPAEPGPCLSGQRGADHTAS) are disordered.

It belongs to the IspD/TarI cytidylyltransferase family. IspD subfamily. Homodimer. As to expression, ubiquitously expressed, with high expression in brain.

It is found in the cytoplasm. It localises to the cytosol. The enzyme catalyses D-ribitol 5-phosphate + CTP + H(+) = CDP-L-ribitol + diphosphate. It catalyses the reaction D-ribose 5-phosphate + CTP + H(+) = CDP-D-ribose + diphosphate. It carries out the reaction D-ribulose 5-phosphate + CTP + H(+) = CDP-D-ribulose + diphosphate. The protein operates within protein modification; protein glycosylation. Its function is as follows. Cytidylyltransferase required for protein O-linked mannosylation. Catalyzes the formation of CDP-ribitol nucleotide sugar from D-ribitol 5-phosphate. CDP-ribitol is a substrate of FKTN during the biosynthesis of the phosphorylated O-mannosyl trisaccharide (N-acetylgalactosamine-beta-3-N-acetylglucosamine-beta-4-(phosphate-6-)mannose), a carbohydrate structure present in alpha-dystroglycan (DAG1), which is required for binding laminin G-like domain-containing extracellular proteins with high affinity. Shows activity toward other pentose phosphate sugars and mediates formation of CDP-ribulose or CDP-ribose using CTP and ribulose-5-phosphate or ribose-5-phosphate, respectively. Not Involved in dolichol production. This Homo sapiens (Human) protein is D-ribitol-5-phosphate cytidylyltransferase.